The sequence spans 63 residues: MSKKCQLTGKVANNGYAVSHSHKRTKKLQKVNLQHKKVWSSGQNKWVKMLISTKAIKTLTQTL.

Belongs to the bacterial ribosomal protein bL28 family.

It is found in the plastid. Its subcellular location is the chloroplast. The polypeptide is Large ribosomal subunit protein bL28c (Pyropia yezoensis (Susabi-nori)).